The primary structure comprises 347 residues: NADH-ubiquinone oxidoreductase chain 2 (347 aa).

11 consecutive transmembrane segments (helical) span residues 3–23 (PVVLTMILLTIMLGTVIVMTT), 25–45 (HWLLVWIGFEMNMLAIIPILM), 59–79 (YFLTQATASMLLMLAIVINLI), 96–116 (IIMTLALAMKLGLAPFHFWVP), 122–142 (IQLSSGLILLTWQKLAPMSIL), 149–169 (INLHLLLLMSLTSILIGGWGG), 178–198 (IMAYSSIAHMGWMTTIMIYNP), 200–220 (MALLNLTIYIILTTTTFMTFM), 237–257 (MPLLTSAVLMTMLSLGGLPPL), 274–294 (NSIIMPTIMAITALLNLFFYM), and 325–345 (LLSPMIILSTLILPLSPMLAL).

The protein belongs to the complex I subunit 2 family. In terms of assembly, core subunit of respiratory chain NADH dehydrogenase (Complex I) which is composed of 45 different subunits. Interacts with TMEM242.

The protein resides in the mitochondrion inner membrane. The catalysed reaction is a ubiquinone + NADH + 5 H(+)(in) = a ubiquinol + NAD(+) + 4 H(+)(out). Core subunit of the mitochondrial membrane respiratory chain NADH dehydrogenase (Complex I) which catalyzes electron transfer from NADH through the respiratory chain, using ubiquinone as an electron acceptor. Essential for the catalytic activity and assembly of complex I. This chain is NADH-ubiquinone oxidoreductase chain 2, found in Paranyctimene raptor (Unstriped tube-nosed fruit bat).